Reading from the N-terminus, the 451-residue chain is ADP-specific phosphofructokinase (451 aa).

In terms of domain architecture, ADPK spans 1-450 (MSVPQDVSIF…FITYVNYLKR (450 aa)). 3 residues coordinate Mg(2+): Glu261, Glu291, and Asp434. Asp434 functions as the Proton acceptor in the catalytic mechanism.

Belongs to the carbohydrate kinase PfkC family. Mg(2+) serves as cofactor.

The protein resides in the cytoplasm. The catalysed reaction is beta-D-fructose 6-phosphate + ADP = beta-D-fructose 1,6-bisphosphate + AMP + H(+). It participates in carbohydrate degradation; glycolysis. Its function is as follows. Catalyzes the phosphorylation of fructose 6-phosphate to fructose 1,6-bisphosphate using ADP as the phosphate donor. The protein is ADP-specific phosphofructokinase of Pyrococcus abyssi (strain GE5 / Orsay).